The sequence spans 97 residues: Co-chaperonin GroES (97 aa).

Belongs to the GroES chaperonin family. In terms of assembly, heptamer of 7 subunits arranged in a ring. Interacts with the chaperonin GroEL.

The protein resides in the cytoplasm. Functionally, together with the chaperonin GroEL, plays an essential role in assisting protein folding. The GroEL-GroES system forms a nano-cage that allows encapsulation of the non-native substrate proteins and provides a physical environment optimized to promote and accelerate protein folding. GroES binds to the apical surface of the GroEL ring, thereby capping the opening of the GroEL channel. The sequence is that of Co-chaperonin GroES from Arthrobacter sp. (strain FB24).